Consider the following 184-residue polypeptide: Large ribosomal subunit protein uL6 (184 aa).

The protein belongs to the universal ribosomal protein uL6 family. In terms of assembly, part of the 50S ribosomal subunit.

Its function is as follows. This protein binds to the 23S rRNA, and is important in its secondary structure. It is located near the subunit interface in the base of the L7/L12 stalk, and near the tRNA binding site of the peptidyltransferase center. The polypeptide is Large ribosomal subunit protein uL6 (Amoebophilus asiaticus (strain 5a2)).